A 1036-amino-acid polypeptide reads, in one-letter code: MAAMAPALTDAAAEAHHIRFKLAPPSSTLSPGSAENNGNANILISANGTKRKAIAAEDPSLDFRNNPTKEDLGKLQPLVASYLCSDVTSVPAKESLKLQGVFSKQTVLKSHPLLSQSYELRAELLGRQPVLEFSLENLRTMNTSGQTALPQAPVNGLAKKLTKSSTHSDHDNSSSLNGGKRSLTSSSLQGGEVGGPDSGNLKGGMTNCTLPHRSLDIQHTTLYSNNSTANKSSVNSMDQPALQGSSRLSPSTDSSSNLTNVKLEVKKSPLSSILFSALDSDTRITALLRRQADIEIRARRLQKRLQVVQAKQVERHLQHQLGGFLETTLSKLPNLESLRSRSQLMLTRKAEAALRKAASESATSEGLSNFLKSDSISEELERFTASGIANLRCSEQAFDSDVTDSSSGGESDIEEEELTRADPEQCHVPLKRRSEWRWAADRAAIVSRWNWLQAHVSDLEYRIRQQTDIYKQIRANKGLIVLGEAPFPDHTTDLLSLSSEVKTDHGRDKLIESVSQPSENHGILVSNITESLSTKSCGAPRPVNGVVNSLQPVLADQVPGDSSDAEEQLHKKQRLNLVSSSDGTCVAARTRPVLTCKKRRLVRPSSIVPLSKKVHRNVRSGCDVNPSCALCGSGSVNTMPPEIHYEAPLLERLSQLDSCVHPVLAFPDDVPTSLHFQSMLKSQWQNKPFDKIKPTKKFSLKHRATMPCSLSDPVRKDRHKLVNSFLTTAMLKHHTDMSSPSYLTATHHPPHSPLVRQLSTSSDTSTPTSSGSQVAASTSQPVRRRRGESSFDINNIVIPMSVAATTRVEKLQYKEILTPSWREVDVQSLKGSPDEENEEIEDLSDAAFAALHAKCEEMERARWLWTTSVPPQRRGSRSYRSSDGRTTPQLGSANPSTPQPASPDVSSSHSLSEFSHGQSPRSPISPELHSAPLTPVARDSLRHLASEDTRCSTPELGLDEQSVQPWERRTFPLAYSPQAECEEQLDAQDTAARCTRRTSGSKTGREAEVAPTSPPVVPLKSRHLAATVTAQRPAHR.

At Lys104 the chain carries N6-acetyllysine. Disordered regions lie at residues 145 to 211 and 226 to 257; these read GQTA…CTLP and NSTA…SSSN. Residues 226 to 244 are compositionally biased toward polar residues; that stretch reads NSTANKSSVNSMDQPALQG. Over residues 245 to 256 the composition is skewed to low complexity; that stretch reads SSRLSPSTDSSS. A Phosphoserine modification is found at Ser249. Lys262 participates in a covalent cross-link: Glycyl lysine isopeptide (Lys-Gly) (interchain with G-Cter in SUMO2). Ser268 carries the post-translational modification Phosphoserine. The stretch at 285-312 forms a coiled coil; it reads TALLRRQADIEIRARRLQKRLQVVQAKQ. Residue Lys331 forms a Glycyl lysine isopeptide (Lys-Gly) (interchain with G-Cter in SUMO2) linkage. Disordered stretches follow at residues 399-423 and 739-787; these read DSDV…RADP and SPSY…RRRG. Positions 759-772 are enriched in low complexity; sequence STSSDTSTPTSSGS. Residues 781–813 form a required for activation of KAT8 histone acetyltransferase activity region; sequence PVRRRRGESSFDINNIVIPMSVAATTRVEKLQY. Residues 815 to 966 form the PEHE domain; it reads EILTPSWREV…GLDEQSVQPW (152 aa). The interval 841–859 is interaction with KAT8 HAT domain; that stretch reads EDLSDAAFAALHAKCEEME. Positions 869–931 are disordered; it reads VPPQRRGSRS…SPISPELHSA (63 aa). Residues 886-896 show a composition bias toward polar residues; the sequence is TTPQLGSANPS. Positions 906–919 are enriched in low complexity; it reads SSSHSLSEFSHGQS. Phosphoserine occurs at positions 922 and 925. Thr934 bears the Phosphothreonine mark. Ser976 is subject to Phosphoserine. A disordered region spans residues 989–1020; the sequence is DTAARCTRRTSGSKTGREAEVAPTSPPVVPLK.

In terms of assembly, component of the NSL complex at least composed of MOF/KAT8, KANSL1, KANSL2, KANSL3, MCRS1, PHF20, OGT1/OGT, WDR5 and HCFC1. Interacts (via PEHE domain) with KAT8 (via HAT domain); the interaction is direct. Component of some MLL1/MLL complex, at least composed of the core components KMT2A/MLL1, ASH2L, HCFC1, WDR5 and RBBP5, as well as the facultative components BACC1, CHD8, E2F6, HSP70, INO80C, KANSL1, LAS1L, MAX, MCRS1, MGA, KAT8/MOF, PELP1, PHF20, PRP31, RING2, RUVB1/TIP49A, RUVB2/TIP49B, SENP3, TAF1, TAF4, TAF6, TAF7, TAF9 and TEX10.

It is found in the nucleus. It localises to the chromosome. The protein localises to the centromere. The protein resides in the kinetochore. Its subcellular location is the mitochondrion. It is found in the cytoplasm. It localises to the cytoskeleton. The protein localises to the spindle pole. In terms of biological role, non-catalytic component of the NSL histone acetyltransferase complex, a multiprotein complex that mediates histone H4 acetylation at 'Lys-5'- and 'Lys-8' (H4K5ac and H4K8ac) at transcription start sites and promotes transcription initiation. The NSL complex also acts as a regulator of gene expression in mitochondria. In addition to its role in transcription, KANSL1 also plays an essential role in spindle assembly during mitosis. Associates with microtubule ends and contributes to microtubule stability. The chain is KAT8 regulatory NSL complex subunit 1 (Kansl1) from Mus musculus (Mouse).